A 61-amino-acid chain; its full sequence is Sec-independent protein translocase protein TatA (61 aa).

A helical transmembrane segment spans residues 1–21; it reads MFGIGMPELIVILVIVLVVFG.

This sequence belongs to the TatA/E family. In terms of assembly, the Tat system comprises two distinct complexes: a TatABC complex, containing multiple copies of TatA, TatB and TatC subunits, and a separate TatA complex, containing only TatA subunits. Substrates initially bind to the TatABC complex, which probably triggers association of the separate TatA complex to form the active translocon.

The protein resides in the cell inner membrane. Part of the twin-arginine translocation (Tat) system that transports large folded proteins containing a characteristic twin-arginine motif in their signal peptide across membranes. TatA could form the protein-conducting channel of the Tat system. The chain is Sec-independent protein translocase protein TatA from Geobacter metallireducens (strain ATCC 53774 / DSM 7210 / GS-15).